Here is a 1171-residue protein sequence, read N- to C-terminus: ATP-dependent helicase/deoxyribonuclease subunit B (1171 aa).

The UvrD-like helicase ATP-binding domain occupies 1–343 (MSLRFVIGRA…LVADENYRYR (343 aa)). Residue 8 to 15 (GRAGSGKS) coordinates ATP. The UvrD-like helicase C-terminal domain maps to 281 to 587 (MEQPRFHSPA…QFANIPPSLD (307 aa)). [4Fe-4S] cluster contacts are provided by cysteine 805, cysteine 1129, cysteine 1132, and cysteine 1138.

The protein belongs to the helicase family. AddB/RexB type 1 subfamily. Heterodimer of AddA and AddB. The cofactor is Mg(2+). [4Fe-4S] cluster is required as a cofactor.

The heterodimer acts as both an ATP-dependent DNA helicase and an ATP-dependent, dual-direction single-stranded exonuclease. Recognizes the chi site generating a DNA molecule suitable for the initiation of homologous recombination. The AddB subunit has 5' -&gt; 3' nuclease activity but not helicase activity. This Bacillus cereus (strain AH187) protein is ATP-dependent helicase/deoxyribonuclease subunit B.